The primary structure comprises 229 residues: Protein fmp52-2, mitochondrial (229 aa).

The transit peptide at 1–45 (MTTAAVFGSTGAVGGQILATLLASDAFSSVKTVSRRLPNAQSPKL) directs the protein to the mitochondrion.

The protein belongs to the FMP52 family.

Its subcellular location is the mitochondrion outer membrane. This Aspergillus oryzae (strain ATCC 42149 / RIB 40) (Yellow koji mold) protein is Protein fmp52-2, mitochondrial (fmp522).